Reading from the N-terminus, the 257-residue chain is uncharacterized protein (257 aa).

A helical membrane pass occupies residues Ile-6–Phe-26.

The protein belongs to the staphylococcal tandem lipoprotein family.

It localises to the cell membrane. This is an uncharacterized protein from Staphylococcus aureus (strain NCTC 8325 / PS 47).